Here is a 910-residue protein sequence, read N- to C-terminus: Periodic tryptophan protein 2 homolog (910 aa).

WD repeat units follow at residues 12 to 50 (GTVY…SKTL), 53 to 92 (DCNY…KIYT), 94 to 134 (RSNK…KVYN), 144 to 183 (LSSD…NLFI), 188 to 227 (SHKG…GELV), 271 to 310 (GKSV…LVHN), 313 to 355 (VSEM…YVMK), 358 to 397 (AHSL…CTVT), 400 to 439 (EHTS…NFRT), 443 to 485 (PEPT…DILS), 486 to 523 (GHES…AETV), 525 to 563 (VSHE…NLGS), 586 to 625 (AKTK…ILKK), and 688 to 728 (RPEV…DPFQ). Residues 867-910 (SKKSVKKEEEEEEDVSDESDDEDIEDESAGSDDEDSDDSVEIIE) form a disordered region. Residues 875–910 (EEEEEDVSDESDDEDIEDESAGSDDEDSDDSVEIIE) are compositionally biased toward acidic residues.

The protein belongs to the WD repeat PWP2 family.

This chain is Periodic tryptophan protein 2 homolog, found in Caenorhabditis elegans.